The chain runs to 906 residues: Protein translocase subunit SecA (906 aa).

ATP is bound by residues Q89, G107 to T111, and D501. Residues C891, C893, C902, and H903 each contribute to the Zn(2+) site.

The protein belongs to the SecA family. In terms of assembly, monomer and homodimer. Part of the essential Sec protein translocation apparatus which comprises SecA, SecYEG and auxiliary proteins SecDF-YajC and YidC. The cofactor is Zn(2+).

Its subcellular location is the cell inner membrane. The protein resides in the cytoplasm. It carries out the reaction ATP + H2O + cellular proteinSide 1 = ADP + phosphate + cellular proteinSide 2.. Part of the Sec protein translocase complex. Interacts with the SecYEG preprotein conducting channel. Has a central role in coupling the hydrolysis of ATP to the transfer of proteins into and across the cell membrane, serving both as a receptor for the preprotein-SecB complex and as an ATP-driven molecular motor driving the stepwise translocation of polypeptide chains across the membrane. The sequence is that of Protein translocase subunit SecA from Parvibaculum lavamentivorans (strain DS-1 / DSM 13023 / NCIMB 13966).